The sequence spans 375 residues: GTPase HflX (375 aa).

Residues 194 to 371 (PHIAIVGYAS…RIATLLAGTK (178 aa)) form the Hflx-type G domain. Residues 200–207 (GYASAGKT), 225–229 (FTTIT), 246–249 (DTVG), 314–317 (NKID), and 349–351 (SAK) each bind GTP. The Mg(2+) site is built by T207 and T227.

The protein belongs to the TRAFAC class OBG-HflX-like GTPase superfamily. HflX GTPase family. Monomer. Associates with the 50S ribosomal subunit. Requires Mg(2+) as cofactor.

It localises to the cytoplasm. Functionally, GTPase that associates with the 50S ribosomal subunit and may have a role during protein synthesis or ribosome biogenesis. In Hyperthermus butylicus (strain DSM 5456 / JCM 9403 / PLM1-5), this protein is GTPase HflX.